A 263-amino-acid chain; its full sequence is uncharacterized protein (263 aa).

31 to 38 (GPTGSGKT) contacts ATP.

Belongs to the CbbQ/NirQ/NorQ/GpvN family.

This is an uncharacterized protein from Staphylococcus aureus (strain NCTC 8325 / PS 47).